The chain runs to 457 residues: Siroheme synthase (457 aa).

The precorrin-2 dehydrogenase /sirohydrochlorin ferrochelatase stretch occupies residues 1-204 (MDHLPIFCQL…ADEKAVNATT (204 aa)). Residues 22-23 (DV) and 43-44 (LN) contribute to the NAD(+) site. Phosphoserine is present on Ser128. Positions 216-457 (GEVVLVGAGP…RDKLNWFSNH (242 aa)) are uroporphyrinogen-III C-methyltransferase. Pro225 serves as a coordination point for S-adenosyl-L-methionine. Asp248 (proton acceptor) is an active-site residue. Lys270 serves as the catalytic Proton donor. S-adenosyl-L-methionine contacts are provided by residues 301–303 (GGD), Ile306, 331–332 (TA), Met382, and Gly411.

The protein in the N-terminal section; belongs to the precorrin-2 dehydrogenase / sirohydrochlorin ferrochelatase family. This sequence in the C-terminal section; belongs to the precorrin methyltransferase family.

The catalysed reaction is uroporphyrinogen III + 2 S-adenosyl-L-methionine = precorrin-2 + 2 S-adenosyl-L-homocysteine + H(+). It catalyses the reaction precorrin-2 + NAD(+) = sirohydrochlorin + NADH + 2 H(+). It carries out the reaction siroheme + 2 H(+) = sirohydrochlorin + Fe(2+). It participates in cofactor biosynthesis; adenosylcobalamin biosynthesis; precorrin-2 from uroporphyrinogen III: step 1/1. Its pathway is cofactor biosynthesis; adenosylcobalamin biosynthesis; sirohydrochlorin from precorrin-2: step 1/1. The protein operates within porphyrin-containing compound metabolism; siroheme biosynthesis; precorrin-2 from uroporphyrinogen III: step 1/1. It functions in the pathway porphyrin-containing compound metabolism; siroheme biosynthesis; siroheme from sirohydrochlorin: step 1/1. It participates in porphyrin-containing compound metabolism; siroheme biosynthesis; sirohydrochlorin from precorrin-2: step 1/1. Functionally, multifunctional enzyme that catalyzes the SAM-dependent methylations of uroporphyrinogen III at position C-2 and C-7 to form precorrin-2 via precorrin-1. Then it catalyzes the NAD-dependent ring dehydrogenation of precorrin-2 to yield sirohydrochlorin. Finally, it catalyzes the ferrochelation of sirohydrochlorin to yield siroheme. This is Siroheme synthase from Salmonella paratyphi A (strain ATCC 9150 / SARB42).